The following is a 240-amino-acid chain: Homeobox protein DLX-4 (240 aa).

Disordered stretches follow at residues aspartate 44–leucine 70 and leucine 175–serine 194. A DNA-binding region (homeobox) is located at residues leucine 116–leucine 175.

It belongs to the distal-less homeobox family. As to expression, branchial arches, molar and incisor teeth and limbs.

Its subcellular location is the nucleus. Functionally, may play a role in determining the production of hemoglobin S. May act as a repressor. During embryonic development, plays a role in palatogenesis. The sequence is that of Homeobox protein DLX-4 (Dlx4) from Mus musculus (Mouse).